Reading from the N-terminus, the 39-residue chain is Large ribosomal subunit protein bL36 (39 aa).

It belongs to the bacterial ribosomal protein bL36 family.

This chain is Large ribosomal subunit protein bL36, found in Limosilactobacillus reuteri (strain DSM 20016) (Lactobacillus reuteri).